The primary structure comprises 590 residues: Potassium-transporting ATPase potassium-binding subunit (590 aa).

Transmembrane regions (helical) follow at residues 3–23 (AFLL…KPLG), 63–83 (HYAL…YALQ), 134–154 (GLAV…IALI), 177–197 (VYVL…QGVI), 284–304 (FVQM…FGGM), 312–332 (WAVL…LAWA), 359–379 (FGIV…CGAV), 388–408 (ALGG…FGGV), 411–431 (GLYG…LMIG), 451–471 (IAIL…VVVT), 515–535 (LALG…VLAM), and 558–578 (LFVV…YIPA).

Belongs to the KdpA family. As to quaternary structure, the system is composed of three essential subunits: KdpA, KdpB and KdpC.

The protein localises to the cell inner membrane. In terms of biological role, part of the high-affinity ATP-driven potassium transport (or Kdp) system, which catalyzes the hydrolysis of ATP coupled with the electrogenic transport of potassium into the cytoplasm. This subunit binds the periplasmic potassium ions and delivers the ions to the membrane domain of KdpB through an intramembrane tunnel. The sequence is that of Potassium-transporting ATPase potassium-binding subunit from Ralstonia pickettii (strain 12J).